A 43-amino-acid polypeptide reads, in one-letter code: Protein PsbN (43 aa).

The chain crosses the membrane as a helical span at residues 5 to 27 (TLIAISISGLIVSFTGYALYTAF).

Belongs to the PsbN family.

It is found in the plastid. Its subcellular location is the chloroplast thylakoid membrane. Its function is as follows. May play a role in photosystem I and II biogenesis. This is Protein PsbN from Cicer arietinum (Chickpea).